We begin with the raw amino-acid sequence, 1413 residues long: MKALLDLFKQVQQEEVFDAIKIGLASPDKIRSWSFGEVKKPETINYRTFKPERDGLFCAKIFGPIKDYECLCGKYKRLKHRGVICEKCGVEVTLAKVRRERMGHIELASPVAHIWFLKSLPSRLGMVLDMTLRDIERVLYFEAYVVIDPGMTPLKARQIMTEEDYYNKVEEYGDEFRAEMGAEGVRELLRAINIDEQVETLRSELKNTGSEAKIKKYAKRLKVLEAFQRSGIKPEWMILEVLPVLPPELRPLVPLDGGRFATSDLNDLYRRVINRNNRLKRLLELKAPEIIVRNEKRMLQEAVDSLLDNGRRGKAMTGANKRPLKSLADMIKGKGGRFRQNLLGKRVDYSGRSVIVVGPTLKLHQCGLPKLMALELFKPFIFNKLEVMGVATTIKAAKKEVENQTPVVWDILEEVIREHPVMLNRAPTLHRLGIQAFEPVLIEGKAIQLHPLVCAAFNADFDGDQMAVHVPLSLEAQMEARTLMLASNNVLFPANGDPSIVPSQDIVLGLYYATREAINGKGEGMTFTGVSEVLRAYENKEVELASRVNVRITEMVHNEDKSEGAPAFVPKISLYATTVGRSILSEILPPGLPFSVLNKPLKKKEISRLINTAFRKCGLRETVIFADQLMQSGFRLATRAGISICVDDMLVPPQKETIVGDAAKKVKEYDRQYMSGLVTAQERYNNVVDIWSATSEAVGKAMMEQLSTEPVTDRDGNETRQESFNSIYMMADSGARGSAVQIRQLAGMRGLMAKPDGSIIETPITANFREGLNVLQYFISTHGARKGLADTALKTANSGYLTRRLVDVTQDLVVVEDDCGTSQGVAMKALVEGGEVVEALRDRILGRVAVADVVNPETQETLYESGTLLDESAVEEIERLGIDEVRVRTPLTCETRYGLCASCYGRDLGRGSLVNVGEAVGVIAAQSIGEPGTQLTMRTFHIGGAASRAAVASSVEAKSNGTVRFTATMRYVTNAKGEQIVISRSGEALITDDHGRERERHKVPYGATLLQLDGAQIKAGTQLATWDPLTRPIITEWGGTVKFENVEEGVTVAKQIDDVTGLSTLVVIDAKRRGSQSSKSVRPQVKLLDANGEEVKIPNSEHSVQIGFQVGALITVKDGQQVQVGEVLARIPTEAQKTRDITGGLPRVAELFEARSPKDAGILAEVTGTTSFGKDTKGKQRLVITDLEGNQHEFLIAKEKQVLVHDGQVVNKGEMIVDGPADPHDILRLQGIEALSRYIVDEVQDVYRLQGVKINDKHIEVIVRQMLRRVQITDNGDTRFIPGEQVERSDMLDENDRMNAEDKRPATYENILLGITKASLSTDSFISAASFQETTRVLTEAAIMGKRDDLRGLKENVIVGRLIPAGTGLAFHKARKTKEMADRERFDQIAAEEAFEFGTPETPAAEQTPHTNE.

Residues Cys70, Cys72, Cys85, and Cys88 each coordinate Zn(2+). Mg(2+) is bound by residues Asp460, Asp462, and Asp464. Residues Cys819, Cys893, Cys900, and Cys903 each coordinate Zn(2+). The disordered stretch occupies residues Glu1393 to Glu1413.

Belongs to the RNA polymerase beta' chain family. The RNAP catalytic core consists of 2 alpha, 1 beta, 1 beta' and 1 omega subunit. When a sigma factor is associated with the core the holoenzyme is formed, which can initiate transcription. Mg(2+) is required as a cofactor. The cofactor is Zn(2+).

The enzyme catalyses RNA(n) + a ribonucleoside 5'-triphosphate = RNA(n+1) + diphosphate. DNA-dependent RNA polymerase catalyzes the transcription of DNA into RNA using the four ribonucleoside triphosphates as substrates. The chain is DNA-directed RNA polymerase subunit beta' from Paraburkholderia phymatum (strain DSM 17167 / CIP 108236 / LMG 21445 / STM815) (Burkholderia phymatum).